We begin with the raw amino-acid sequence, 290 residues long: Protein SSO1 (290 aa).

Residues 1–265 (MSYNNPYQLE…ARKARKNKIR (265 aa)) are Cytoplasmic-facing. The region spanning 190–252 (LAEVQARHQE…EQGVGHTDKA (63 aa)) is the t-SNARE coiled-coil homology domain. A helical; Anchor for type IV membrane protein transmembrane segment spans residues 266–287 (CWLIVFAIIVVVVVVVVVPAVV). Residues 288-290 (KTR) are Extracellular-facing.

It belongs to the syntaxin family.

Its subcellular location is the membrane. Required for vesicle fusion with the plasma membrane. This is Protein SSO1 (SSO1) from Saccharomyces cerevisiae (strain ATCC 204508 / S288c) (Baker's yeast).